We begin with the raw amino-acid sequence, 37 residues long: Large ribosomal subunit protein bL36 (37 aa).

This sequence belongs to the bacterial ribosomal protein bL36 family.

The sequence is that of Large ribosomal subunit protein bL36 (rpmJ) from Mycoplasma sp.